The sequence spans 90 residues: Major envelope protein (90 aa).

Residues 53–70 (AVSVVSWAVAAGLIGELI) form a helical membrane-spanning segment.

The protein resides in the virion membrane. Its function is as follows. Essential for membrane formation. The chain is Major envelope protein (P9) from Pseudomonas savastanoi pv. phaseolicola (Pseudomonas syringae pv. phaseolicola).